Here is a 164-residue protein sequence, read N- to C-terminus: Phosphopantetheine adenylyltransferase (164 aa).

Substrate is bound at residue threonine 10. ATP is bound by residues 10-11 (TF) and histidine 18. The substrate site is built by lysine 42, leucine 74, and arginine 88. ATP-binding positions include 89 to 91 (GIR), glutamate 99, and 124 to 130 (YAFVSST).

It belongs to the bacterial CoaD family. As to quaternary structure, homohexamer. Requires Mg(2+) as cofactor.

It localises to the cytoplasm. It catalyses the reaction (R)-4'-phosphopantetheine + ATP + H(+) = 3'-dephospho-CoA + diphosphate. It functions in the pathway cofactor biosynthesis; coenzyme A biosynthesis; CoA from (R)-pantothenate: step 4/5. Functionally, reversibly transfers an adenylyl group from ATP to 4'-phosphopantetheine, yielding dephospho-CoA (dPCoA) and pyrophosphate. The sequence is that of Phosphopantetheine adenylyltransferase from Tolumonas auensis (strain DSM 9187 / NBRC 110442 / TA 4).